The sequence spans 275 residues: Acetyl-coenzyme A carboxylase carboxyl transferase subunit beta (275 aa).

The CoA carboxyltransferase N-terminal domain maps to 21–275; sequence GLWIKCQCGA…IKIIGMHQAG (255 aa). Residues Cys-26, Cys-28, Cys-44, and Cys-47 each contribute to the Zn(2+) site. The C4-type zinc-finger motif lies at 26-47; that stretch reads CQCGAILFAKDLERNLKVCQKC.

This sequence belongs to the AccD/PCCB family. In terms of assembly, acetyl-CoA carboxylase is a heterohexamer composed of biotin carboxyl carrier protein (AccB), biotin carboxylase (AccC) and two subunits each of ACCase subunit alpha (AccA) and ACCase subunit beta (AccD). It depends on Zn(2+) as a cofactor.

Its subcellular location is the cytoplasm. It carries out the reaction N(6)-carboxybiotinyl-L-lysyl-[protein] + acetyl-CoA = N(6)-biotinyl-L-lysyl-[protein] + malonyl-CoA. It participates in lipid metabolism; malonyl-CoA biosynthesis; malonyl-CoA from acetyl-CoA: step 1/1. In terms of biological role, component of the acetyl coenzyme A carboxylase (ACC) complex. Biotin carboxylase (BC) catalyzes the carboxylation of biotin on its carrier protein (BCCP) and then the CO(2) group is transferred by the transcarboxylase to acetyl-CoA to form malonyl-CoA. In Desulforudis audaxviator (strain MP104C), this protein is Acetyl-coenzyme A carboxylase carboxyl transferase subunit beta.